A 154-amino-acid chain; its full sequence is SsrA-binding protein (154 aa).

The protein belongs to the SmpB family.

Its subcellular location is the cytoplasm. Its function is as follows. Required for rescue of stalled ribosomes mediated by trans-translation. Binds to transfer-messenger RNA (tmRNA), required for stable association of tmRNA with ribosomes. tmRNA and SmpB together mimic tRNA shape, replacing the anticodon stem-loop with SmpB. tmRNA is encoded by the ssrA gene; the 2 termini fold to resemble tRNA(Ala) and it encodes a 'tag peptide', a short internal open reading frame. During trans-translation Ala-aminoacylated tmRNA acts like a tRNA, entering the A-site of stalled ribosomes, displacing the stalled mRNA. The ribosome then switches to translate the ORF on the tmRNA; the nascent peptide is terminated with the 'tag peptide' encoded by the tmRNA and targeted for degradation. The ribosome is freed to recommence translation, which seems to be the essential function of trans-translation. The protein is SsrA-binding protein of Methylobacillus flagellatus (strain ATCC 51484 / DSM 6875 / VKM B-1610 / KT).